The sequence spans 277 residues: GPALPP motifs-containing protein 1 (277 aa).

Residues 1–240 form a disordered region; that stretch reads MARDLIGPAL…VWTDTPADRE (240 aa). Alanine 2 is modified (N-acetylalanine). The GPALPP motif 1 signature appears at 7–12; the sequence is GPALPP. Serine 28 is subject to Phosphoserine. Residues 32 to 37 carry the GPALPP motif 2 motif; it reads GPALPP. 2 stretches are compositionally biased toward acidic residues: residues 60–69 and 81–90; these read GNQESEEDDT and DDDDDDDDEG. A GPALPP motif 3 motif is present at residues 93–98; it reads GPALPP. At serine 106 the chain carries Phosphoserine. Over residues 108-117 the composition is skewed to pro residues; sequence PRPMIGPALP. Positions 113-118 match the GPALPP motif 4 motif; that stretch reads GPALPP. A phosphoserine mark is found at serine 138 and serine 143. At threonine 147 the chain carries Phosphothreonine. Residues serine 149 and serine 150 each carry the phosphoserine modification. The segment covering 172–196 has biased composition (basic and acidic residues); the sequence is EFEKRAQRMKEKLTKGDDDSSKPIT.

The sequence is that of GPALPP motifs-containing protein 1 (GPALPP1) from Bos taurus (Bovine).